The primary structure comprises 411 residues: Glutamate dehydrogenase 1 (411 aa).

Lysine 102 is an active-site residue.

This sequence belongs to the Glu/Leu/Phe/Val dehydrogenases family.

The catalysed reaction is L-glutamate + NAD(+) + H2O = 2-oxoglutarate + NH4(+) + NADH + H(+). The enzyme catalyses L-glutamate + NADP(+) + H2O = 2-oxoglutarate + NH4(+) + NADPH + H(+). The polypeptide is Glutamate dehydrogenase 1 (GDH1) (Arabidopsis thaliana (Mouse-ear cress)).